Reading from the N-terminus, the 110-residue chain is U32-theraphotoxin-Cg1a (110 aa).

Positions 1-19 (MNHCFLILFTLIVFTVVWS) are cleaved as a signal peptide. Positions 20–43 (LEENEEYPDEDEMIESFMDGYSYR) are excised as a propeptide. 4 disulfides stabilise this stretch: Cys49–Cys63, Cys56–Cys69, Cys60–Cys105, and Cys62–Cys80.

Belongs to the neurotoxin 03 (Tx2) family. 02 subfamily. As to expression, expressed by the venom gland.

It localises to the secreted. Its function is as follows. Probable ion channel inhibitor. The polypeptide is U32-theraphotoxin-Cg1a (Chilobrachys guangxiensis (Chinese earth tiger tarantula)).